A 533-amino-acid polypeptide reads, in one-letter code: Calcium-dependent protein kinase 19 (533 aa).

Composition is skewed to polar residues over residues 1–12 (MGSCCSRATSPD) and 24–38 (SHQT…SYNH). Residues 1–53 (MGSCCSRATSPDSGRGGANGYGYSHQTKPAQTTPSYNHPQPPPPAEVRYTPSA) are disordered. The N-myristoyl glycine moiety is linked to residue G2. Residues 85–343 (YSLGKELGRG…SAQVLQHPWL (259 aa)) form the Protein kinase domain. Residues 91–99 (LGRGQFGVT) and K114 each bind ATP. The active-site Proton acceptor is the D209. The tract at residues 348–378 (ASDKPIDSAVLSRMKQFRAMNKLKKMALKVI) is autoinhibitory domain. EF-hand domains follow at residues 385 to 420 (EEIK…LGSK), 421 to 456 (LSEA…RHKL), 457 to 492 (ERDE…HEMG), and 497 to 527 (IKDI…GGMQ). Positions 398, 400, 402, 404, 409, 434, 436, 438, 440, 445, 470, 472, 474, 481, 505, 507, 509, 511, and 516 each coordinate Ca(2+).

It belongs to the protein kinase superfamily. Ser/Thr protein kinase family. CDPK subfamily. In terms of tissue distribution, expressed in root tips, leaf veins, mesophyll cells, flower reproductive organs and mature pollen grains.

The protein resides in the membrane. The enzyme catalyses L-seryl-[protein] + ATP = O-phospho-L-seryl-[protein] + ADP + H(+). It carries out the reaction L-threonyl-[protein] + ATP = O-phospho-L-threonyl-[protein] + ADP + H(+). Activated by calcium. Autophosphorylation may play an important role in the regulation of the kinase activity. In terms of biological role, may play a role in signal transduction pathways that involve calcium as a second messenger. This chain is Calcium-dependent protein kinase 19, found in Oryza sativa subsp. japonica (Rice).